A 138-amino-acid polypeptide reads, in one-letter code: Small ribosomal subunit protein uS12 (138 aa).

Residues 33 to 55 (KEHTNVSSPQKRGVCTRVGTMTP) are disordered. Aspartate 102 is modified (3-methylthioaspartic acid).

This sequence belongs to the universal ribosomal protein uS12 family. In terms of assembly, part of the 30S ribosomal subunit. Contacts proteins S8 and S17. May interact with IF1 in the 30S initiation complex.

With S4 and S5 plays an important role in translational accuracy. Functionally, interacts with and stabilizes bases of the 16S rRNA that are involved in tRNA selection in the A site and with the mRNA backbone. Located at the interface of the 30S and 50S subunits, it traverses the body of the 30S subunit contacting proteins on the other side and probably holding the rRNA structure together. The combined cluster of proteins S8, S12 and S17 appears to hold together the shoulder and platform of the 30S subunit. This is Small ribosomal subunit protein uS12 from Bacillus licheniformis (strain ATCC 14580 / DSM 13 / JCM 2505 / CCUG 7422 / NBRC 12200 / NCIMB 9375 / NCTC 10341 / NRRL NRS-1264 / Gibson 46).